The chain runs to 186 residues: Probable nicotinate-nucleotide adenylyltransferase (186 aa).

It belongs to the NadD family.

It carries out the reaction nicotinate beta-D-ribonucleotide + ATP + H(+) = deamido-NAD(+) + diphosphate. It functions in the pathway cofactor biosynthesis; NAD(+) biosynthesis; deamido-NAD(+) from nicotinate D-ribonucleotide: step 1/1. Catalyzes the reversible adenylation of nicotinate mononucleotide (NaMN) to nicotinic acid adenine dinucleotide (NaAD). The polypeptide is Probable nicotinate-nucleotide adenylyltransferase (Tropheryma whipplei (strain TW08/27) (Whipple's bacillus)).